A 712-amino-acid polypeptide reads, in one-letter code: Elongation factor G (712 aa).

Positions 8–290 constitute a tr-type G domain; it reads TRYRNIGISA…AVIEFLPSPT (283 aa). GTP is bound by residues 17-24, 88-92, and 142-145; these read AHIDAGKT, DTPGH, and NKMD.

The protein belongs to the TRAFAC class translation factor GTPase superfamily. Classic translation factor GTPase family. EF-G/EF-2 subfamily.

The protein localises to the cytoplasm. Catalyzes the GTP-dependent ribosomal translocation step during translation elongation. During this step, the ribosome changes from the pre-translocational (PRE) to the post-translocational (POST) state as the newly formed A-site-bound peptidyl-tRNA and P-site-bound deacylated tRNA move to the P and E sites, respectively. Catalyzes the coordinated movement of the two tRNA molecules, the mRNA and conformational changes in the ribosome. This Acinetobacter baumannii (strain AB0057) protein is Elongation factor G.